The primary structure comprises 56 residues: UPF0291 protein Clos_1191 (56 aa).

The protein belongs to the UPF0291 family.

Its subcellular location is the cytoplasm. In Alkaliphilus oremlandii (strain OhILAs) (Clostridium oremlandii (strain OhILAs)), this protein is UPF0291 protein Clos_1191.